The sequence spans 138 residues: Diuretic hormone 1 (138 aa).

The first 19 residues, 1–19 (MMWWAIWCVMVVVSSAASA), serve as a signal peptide directing secretion. Residues 20-78 (APAPDSAPMDLVQIDSAGPDDESLGYAVSSLEGRYGAEAPWLYLLAEMPRDSQIGRAAV) constitute a propeptide that is removed on maturation. The residue at position 121 (isoleucine 121) is an Isoleucine amide. The propeptide occupies 125–138 (GLQWSRSEQPSAYY).

The protein belongs to the sauvagine/corticotropin-releasing factor/urotensin I family.

The protein localises to the secreted. Regulation of fluid secretion. In Manduca sexta (Tobacco hawkmoth), this protein is Diuretic hormone 1.